Here is a 581-residue protein sequence, read N- to C-terminus: MAGRIPRVFINDLLARTDIVDLIDARVKLKKQGKNFHACCPFHNEKTPSFTVNGEKQFYHCFGCGAHGNAIDFLMNYDKLEFVETVEELAAMHNLEVPFEAGSGPSQIERHQRQTLYQLMDGLNTFYQQSLQQPVATSARQYLEKRGLSHEVIARFAIGFAPPGWDNVLKRFGGNPENRQSLIDAGMLVTNDQGRSYDRFRERVMFPIRDKRGRVIGFGGRVLGNDTPKYLNSPETDIFHKGRQLYGLYEAQQDNAEPNRLLVVEGYMDVVALAQYGINYAVASLGTSTTADHIQLLFRATNNVICCYDGDRAGRDAAWRALETALPYMTDGRQLRFMFLPDGEDPDTLVRKEGKEAFEARMEQAMPLSAFLFNSLMPQVDLSTPDGRARLSTLALPLISQVPGETLRIYLRQELGNKLGILDDSQLERLMPKAAESGVSRPVPQLKRTTMRILIGLLVQNPELATLVPPLENLDENKLPGLGLFRELVNTCLSQPGLTTGQLLEHYRGTNNAATLEKLSMWDDIADKNIAEQTFTDSLNHMFDSLLELRQEELIARERTHGLSNEERLELWTLNQELAKK.

A CHC2-type zinc finger spans residues 40–64 (CPFHNEKTPSFTVNGEKQFYHCFGC). One can recognise a Toprim domain in the interval 259–341 (NRLLVVEGYM…GRQLRFMFLP (83 aa)). Mg(2+) contacts are provided by glutamate 265, aspartate 309, and aspartate 311.

It belongs to the DnaG primase family. As to quaternary structure, monomer. Interacts with DnaB. Zn(2+) is required as a cofactor. It depends on Mg(2+) as a cofactor.

The enzyme catalyses ssDNA + n NTP = ssDNA/pppN(pN)n-1 hybrid + (n-1) diphosphate.. RNA polymerase that catalyzes the synthesis of short RNA molecules used as primers for DNA polymerase during DNA replication. The protein is DNA primase of Shigella flexneri.